A 186-amino-acid chain; its full sequence is Large ribosomal subunit protein uL5 (186 aa).

The protein belongs to the universal ribosomal protein uL5 family. Part of the 50S ribosomal subunit; part of the 5S rRNA/L5/L18/L25 subcomplex. Contacts the 5S rRNA and the P site tRNA. Forms a bridge to the 30S subunit in the 70S ribosome.

Its function is as follows. This is one of the proteins that bind and probably mediate the attachment of the 5S RNA into the large ribosomal subunit, where it forms part of the central protuberance. In the 70S ribosome it contacts protein S13 of the 30S subunit (bridge B1b), connecting the 2 subunits; this bridge is implicated in subunit movement. Contacts the P site tRNA; the 5S rRNA and some of its associated proteins might help stabilize positioning of ribosome-bound tRNAs. This Ruegeria pomeroyi (strain ATCC 700808 / DSM 15171 / DSS-3) (Silicibacter pomeroyi) protein is Large ribosomal subunit protein uL5.